A 294-amino-acid polypeptide reads, in one-letter code: Cytidine deaminase (294 aa).

2 CMP/dCMP-type deaminase domains span residues 48 to 168 (DEDA…FGPK) and 186 to 294 (LTGD…VLLG). 89 to 91 (NME) contacts substrate. A Zn(2+)-binding site is contributed by His102. Residue Glu104 is the Proton donor of the active site. Residues Cys129 and Cys132 each contribute to the Zn(2+) site.

This sequence belongs to the cytidine and deoxycytidylate deaminase family. As to quaternary structure, homodimer. The cofactor is Zn(2+).

The enzyme catalyses cytidine + H2O + H(+) = uridine + NH4(+). It catalyses the reaction 2'-deoxycytidine + H2O + H(+) = 2'-deoxyuridine + NH4(+). This enzyme scavenges exogenous and endogenous cytidine and 2'-deoxycytidine for UMP synthesis. In Salmonella choleraesuis (strain SC-B67), this protein is Cytidine deaminase.